We begin with the raw amino-acid sequence, 340 residues long: Ribose-phosphate pyrophosphokinase (340 aa).

Residues 47–49 (NGE) and 106–107 (RQ) contribute to the ATP site. Mg(2+)-binding residues include His-140 and Asp-182. Residue Lys-206 is part of the active site. D-ribose 5-phosphate contacts are provided by residues Arg-208, Asp-234, and 238–242 (DTAGT).

Belongs to the ribose-phosphate pyrophosphokinase family. Class I subfamily. In terms of assembly, homohexamer. It depends on Mg(2+) as a cofactor.

Its subcellular location is the cytoplasm. The catalysed reaction is D-ribose 5-phosphate + ATP = 5-phospho-alpha-D-ribose 1-diphosphate + AMP + H(+). The protein operates within metabolic intermediate biosynthesis; 5-phospho-alpha-D-ribose 1-diphosphate biosynthesis; 5-phospho-alpha-D-ribose 1-diphosphate from D-ribose 5-phosphate (route I): step 1/1. Its function is as follows. Involved in the biosynthesis of the central metabolite phospho-alpha-D-ribosyl-1-pyrophosphate (PRPP) via the transfer of pyrophosphoryl group from ATP to 1-hydroxyl of ribose-5-phosphate (Rib-5-P). In Bifidobacterium longum (strain NCC 2705), this protein is Ribose-phosphate pyrophosphokinase.